We begin with the raw amino-acid sequence, 728 residues long: Protein psiK (728 aa).

An N-terminal signal peptide occupies residues 1 to 20; sequence MKKTFIFLYCVVLFISTTLA. Topologically, residues 21–666 are extracellular; that stretch reads VEMKKTQDFN…FICKTAAVVS (646 aa). Residues N61, N74, and N104 are each glycosylated (N-linked (GlcNAc...) asparagine). In terms of domain architecture, PA14 spans 118-266; sequence MNLDDKSNYF…YDFCGVCTGN (149 aa). N-linked (GlcNAc...) asparagine glycosylation is found at N272, N326, N335, N438, N543, and N638. A helical membrane pass occupies residues 667 to 687; that stretch reads VGVAVGVAVGGAIALGVFIFA. Over 688–728 the chain is Cytoplasmic; it reads GKKGYDYWKASQGVTMATSNANPLYESNPSGGENPIYTSPN.

Belongs to the prespore-cell-inducing factor family.

The protein localises to the membrane. The polypeptide is Protein psiK (psiK) (Dictyostelium discoideum (Social amoeba)).